We begin with the raw amino-acid sequence, 308 residues long: D-2-hydroxyacid dehydrogenase (308 aa).

NAD(+)-binding positions include 145–146 (TL), 224–226 (VAR), and Asp250. The active site involves Arg226. Residue Glu255 is part of the active site. The active-site Proton donor is the His274. Residue 274-277 (HVSA) participates in NAD(+) binding.

It belongs to the D-isomer specific 2-hydroxyacid dehydrogenase family. As to quaternary structure, homotetramer.

Catalyzes the stereospecific NAD(P)H-dependent reduction of 2-ketocarboxylic acids into the corresponding D-2-hydroxycarboxylic acids. Can use both NADPH or NADH as reductant, displaying a marked preference for NADPH over NADH. Shows a broad substrate specificity, although it displays a marked preference for the 2-ketocarboxylic acids having an unbranched chain of 4-5 carbon atoms. The polypeptide is D-2-hydroxyacid dehydrogenase (ddh) (Haloferax mediterranei (strain ATCC 33500 / DSM 1411 / JCM 8866 / NBRC 14739 / NCIMB 2177 / R-4) (Halobacterium mediterranei)).